The sequence spans 289 residues: Probable WRKY transcription factor 38 (289 aa).

Positions Pro62–Asp103 are disordered. Residues Ser104–Glu172 constitute a DNA-binding region (WRKY). The segment covering Leu249–Ser266 has biased composition (low complexity). Residues Leu249 to Pro278 form a disordered region.

Belongs to the WRKY group III family.

The protein localises to the nucleus. Functionally, transcription factor. Interacts specifically with the W box (5'-(T)TGAC[CT]-3'), a frequently occurring elicitor-responsive cis-acting element. This Arabidopsis thaliana (Mouse-ear cress) protein is Probable WRKY transcription factor 38 (WRKY38).